The chain runs to 261 residues: Large ribosomal subunit protein uL3 (261 aa).

A compositionally biased stretch (low complexity) spans 138–148 (SVSHRSHGSTG). Disordered regions lie at residues 138–163 (SVSH…KKMA) and 214–261 (ADAP…GDQA). Position 151 is an N5-methylglutamine (glutamine 151). A compositionally biased stretch (low complexity) spans 227–261 (APTPVEAAADEAAPAEEPAVTEAPAAEATEAGDQA).

This sequence belongs to the universal ribosomal protein uL3 family. Part of the 50S ribosomal subunit. Forms a cluster with proteins L14 and L19. In terms of processing, methylated by PrmB.

One of the primary rRNA binding proteins, it binds directly near the 3'-end of the 23S rRNA, where it nucleates assembly of the 50S subunit. In Phenylobacterium zucineum (strain HLK1), this protein is Large ribosomal subunit protein uL3.